Here is a 156-residue protein sequence, read N- to C-terminus: Endoribonuclease YbeY (156 aa).

The Zn(2+) site is built by H122, H126, and H132.

This sequence belongs to the endoribonuclease YbeY family. It depends on Zn(2+) as a cofactor.

The protein localises to the cytoplasm. Single strand-specific metallo-endoribonuclease involved in late-stage 70S ribosome quality control and in maturation of the 3' terminus of the 16S rRNA. The sequence is that of Endoribonuclease YbeY from Bacillus cytotoxicus (strain DSM 22905 / CIP 110041 / 391-98 / NVH 391-98).